A 1077-amino-acid polypeptide reads, in one-letter code: Adenylate cyclase type 4 (1077 aa).

Topologically, residues 1-28 (MARLFSPRPPPSEDLFYETYYSLSQQYP) are cytoplasmic. 6 helical membrane-spanning segments follow: residues 29–50 (LLLL…VAWA), 61–80 (FLTT…GLAS), 94–117 (GLVW…VSAW), 120–138 (VSYF…PLGM), 141–162 (AAVA…YLGP), and 170–190 (LLPQ…AGVY). The Cytoplasmic segment spans residues 191 to 585 (HKALMERALR…YRLSAIPAFK (395 aa)). Mg(2+)-binding residues include aspartate 278, isoleucine 279, and aspartate 322. ATP-binding positions include 278–283 (DIVGFT), 320–322 (LGD), and arginine 366. At serine 520 the chain carries Phosphoserine. Threonine 536 carries the post-translational modification Phosphothreonine. The next 3 helical transmembrane spans lie at 586-607 (YYEA…LVTN), 611-633 (ALAI…CFSE), and 664-687 (IALG…FFPT). The Extracellular portion of the chain corresponds to 688–714 (SSDCPFQAPNVSSMISNLSWELPGSLP). Asparagine 697 and asparagine 704 each carry an N-linked (GlcNAc...) asparagine glycan. The next 3 membrane-spanning stretches (helical) occupy residues 715 to 736 (LISV…SLFL), 744 to 764 (LLLL…SHAW), and 791 to 807 (MGAI…LVLA). Residues 808-1077 (RQNEYYCRLD…RTGPPSATLG (270 aa)) lie on the Cytoplasmic side of the membrane. ATP-binding positions include lysine 925, 1005–1007 (DIW), 1012–1016 (NVASR), and lysine 1052.

Belongs to the adenylyl cyclase class-4/guanylyl cyclase family. Mg(2+) serves as cofactor. It depends on Mn(2+) as a cofactor. As to expression, detected in the zona glomerulosa and the zona fasciculata in the adrenal gland (at protein level).

Its subcellular location is the cell membrane. The protein localises to the cytoplasm. It catalyses the reaction ATP = 3',5'-cyclic AMP + diphosphate. Its activity is regulated as follows. Activated by forskolin. Insensitive to calcium/calmodulin. Stimulated by GNAS and by the G-protein beta and gamma subunit complex. Catalyzes the formation of the signaling molecule cAMP in response to G-protein signaling. This Homo sapiens (Human) protein is Adenylate cyclase type 4 (ADCY4).